Here is a 531-residue protein sequence, read N- to C-terminus: Laccase-4 (531 aa).

A signal peptide spans 1 to 19 (MLSSITLLPLLAAVSTPAF). Plastocyanin-like domains lie at 23-146 (RNYK…LVIY), 158-315 (VDDA…LHYE), and 384-507 (SLPT…VSSR). N-linked (GlcNAc...) asparagine glycosylation is present at asparagine 66. Cu cation is bound by residues histidine 83 and histidine 85. Cysteine 104 and cysteine 528 form a disulfide bridge. N-linked (GlcNAc...) asparagine glycosylation is present at asparagine 109. Cu cation-binding residues include histidine 128 and histidine 130. 4 N-linked (GlcNAc...) asparagine glycosylation sites follow: asparagine 186, asparagine 231, asparagine 280, and asparagine 395. Cu cation is bound by residues histidine 427, histidine 430, histidine 432, histidine 479, cysteine 480, and histidine 481.

Belongs to the multicopper oxidase family. As to quaternary structure, homodimer. It depends on Cu cation as a cofactor. In terms of tissue distribution, in mycelia, at a higher level than LCC1, LCC2 and LCC3.

The protein resides in the secreted. It catalyses the reaction 4 hydroquinone + O2 = 4 benzosemiquinone + 2 H2O. Lignin degradation and detoxification of lignin-derived products. The sequence is that of Laccase-4 (LCC4) from Thanatephorus cucumeris (Black scurf of potato).